Reading from the N-terminus, the 373-residue chain is Caspase-4 (373 aa).

The segment at 1 to 59 (MAENKHPDKPLKVLEQLGKEVLTEYLEKLVQSNVLKLKEEDKQKFNNAERSDKRWVFVD) is required for LPS-binding. Residues 1 to 80 (MAENKHPDKP…MLLQTFFSVD (80 aa)) constitute a propeptide that is removed on maturation. One can recognise a CARD domain in the interval 1 to 91 (MAENKHPDKP…GSHHGEANLE (91 aa)). Phosphoserine is present on serine 83. Catalysis depends on residues histidine 206 and cysteine 254. A propeptide spanning residues 267-285 (SSKPQLCRGVDLPRNMEAD) is cleaved from the precursor. Arginine 310 carries the post-translational modification (Microbial infection) ADP-riboxanated arginine.

Belongs to the peptidase C14A family. As to quaternary structure, heterotetramer that consists of two anti-parallel arranged heterodimers, each one formed by a 20 kDa (Caspase-4 subunit p20) and a 10 kDa (Caspase-4 subunit p10) subunit. Upon direct LPS-binding, forms large homooligomers, resulting in its activation. These oligomers are often referred to as 'non-canonical inflammasomes'. In its precursor form, interacts with TMEM214; this interaction is required for association with the endoplasmic reticulum membrane. Interacts with CASP1. Interacts with NOD2. Interacts with Serpinb1a, Serpinb1b and Serpinb1c; these interactions regulate CASP4 activity. Heterotetramer that consists of two anti-parallel arranged heterodimers, each one formed by a 20 kDa (Caspase-4 subunit p20) and a 10 kDa (Caspase-4 subunit p10) subunit. In terms of processing, in response to activation signals, undergoes autoproteolytic cleavage and activation. (Microbial infection) ADP-riboxanation by S.flexneri OspC3 blocks CASP4 autoprocessing, preventing CASP4 activation and ability to recognize and cleave GSDMD, thereby thwarting the inflammasome/pyroptosis-mediated defense. As to expression, widely expressed, including in thymus, lung and spleen (at protein level). Very low levels, if any, in the brain.

The protein localises to the cytoplasm. The protein resides in the cytosol. It localises to the endoplasmic reticulum membrane. Its subcellular location is the mitochondrion. It is found in the inflammasome. The protein localises to the secreted. The catalysed reaction is Strict requirement for Asp at the P1 position and has a preferred cleavage sequence of (Ile/Leu/Val/Phe)-Gly-His-Asp-|-.. Its activity is regulated as follows. Activated by homooligomerization induced by direct binding to cytosolic LPS, in a TLR4-independent manner. In addition to LPS, CASP4/CASP11 may also be activated by oxidized phospholipid 1-palmitoyl-2-arachidonoyl- sn-glycero-3-phosphorylcholine, an oxidized phospholipid (oxPAPC), in dendritic cells, promoting adaptive immunity. The role of oxPAPC is however unclear and another report suggests that oxPAPC competes with LPS-binding and inhibits the non-canonical inflammasome in macrophages. In terms of biological role, inflammatory caspase that acts as the effector of the non-canonical inflammasome by mediating lipopolysaccharide (LPS)-induced pyroptosis. Also indirectly activates the NLRP3 and NLRP6 inflammasomes. Acts as a thiol protease that cleaves a tetrapeptide after an Asp residue at position P1: catalyzes cleavage of CGAS and GSDMD. In contrast to its human ortholog, does not cleave IL18. Effector of the non-canonical inflammasome independently of NLRP3 inflammasome and CASP1: the non-canonical inflammasome promotes pyroptosis through GSDMD cleavage without involving secretion of cytokine IL1B and IL18. In the non-canonical inflammasome, CASP4/CASP11 is activated by direct binding to the lipid A moiety of LPS without the need of an upstream sensor. LPS-binding promotes CASP4/CASP11 activation and CASP4/CASP11-mediated cleavage of GSDMD, followed by pyroptosis of infected cells and their extrusion into the gut lumen. Also indirectly promotes secretion of mature cytokines (IL1A, IL18 and HMGB1) downstream of GSDMD-mediated pyroptosis via activation of the NLRP3 and NLRP6 inflammasomes. Involved in NLRP3-dependent CASP1 activation and IL1B and IL18 secretion in response to non-canonical activators, such as UVB radiation or cholera enterotoxin. Involved in NLRP6 inflammasome-dependent activation in response to lipoteichoic acid (LTA), a cell-wall component of Gram-positive bacteria, which leads to CASP1 activation and IL1B and IL18 secretion. Involved in LPS-induced IL6 secretion; this activity may not require caspase enzymatic activity. The non-canonical inflammasome is required for innate immunity to cytosolic, but not vacuolar, bacteria. Plays a crucial role in the restriction of S.typhimurium replication in colonic epithelial cells during infection. Activation of the non-canonical inflammasome in brain endothelial cells can lead to excessive pyroptosis, leading to blood-brain barrier breakdown. Pyroptosis limits bacterial replication, while cytokine secretion promotes the recruitment and activation of immune cells and triggers mucosal inflammation. May also act as an activator of adaptive immunity in dendritic cells, following activation by oxidized phospholipid 1-palmitoyl-2-arachidonoyl- sn-glycero-3-phosphorylcholine, an oxidized phospholipid (oxPAPC). Cleavage of GSDMD is not strictly dependent on the consensus cleavage site but depends on an exosite interface on CASP4/CASP11 that recognizes and binds the Gasdermin-D, C-terminal (GSDMD-CT) part. In contrast, it does not directly process IL1B. During non-canonical inflammasome activation, cuts CGAS and may play a role in the regulation of antiviral innate immune activation. This is Caspase-4 from Mus musculus (Mouse).